A 1121-amino-acid chain; its full sequence is Pleckstrin homology domain-containing family A member 7 (1121 aa).

WW domains follow at residues 9–42 and 54–87; these read DTLP…HPRT and SDLP…HPVT. The disordered stretch occupies residues 105–137; the sequence is PHMSKQDRNQRPSSMVSETSTAGTASTLEAKPG. Over residues 115-131 the composition is skewed to polar residues; the sequence is RPSSMVSETSTAGTAST. In terms of domain architecture, PH spans 164 to 282; the sequence is PVVVRGWLHK…WVRAMNQAAQ (119 aa). The interval 299–514 is disordered; the sequence is QAVPQANHTE…LKMSSEERRA (216 aa). Basic and acidic residues-rich tracts occupy residues 308-356 and 437-446; these read ESCH…EGKR and HWARAQKGDS. Over residues 460 to 475 the composition is skewed to polar residues; it reads PGQSLSFPENYQTLPK. The segment covering 497–514 has biased composition (basic and acidic residues); that stretch reads YAQDRASHLKMSSEERRA. Phosphoserine occurs at positions 536, 545, 569, 604, 608, and 612. The tract at residues 538–696 is interaction with CTNND1; it reads TAPICLGSPE…AESDTDVKLS (159 aa). A disordered region spans residues 547–632; it reads EFTDQGRSRS…NSSHVDRRSM (86 aa). The span at 567–582 shows a compositional bias: pro residues; the sequence is PPSPSDIPPPGPPRVF. Positions 589 to 605 are enriched in basic and acidic residues; that stretch reads TPAERVTVKPPDQRRSV. The stretch at 700–801 forms a coiled coil; it reads EQDRVLQDLE…LQEQHRRAFF (102 aa). Disordered stretches follow at residues 841–876 and 888–971; these read RKTV…VRTP and YVPY…ELGQ. Phosphoserine occurs at positions 858, 860, and 867. A compositionally biased stretch (pro residues) spans 861–871; it reads KPPPQPSPPTS. T870 is subject to Phosphothreonine. Residues S871, S903, and S907 each carry the phosphoserine modification. A compositionally biased stretch (pro residues) spans 933–942; sequence DQPPAVPPLP. A compositionally biased stretch (basic and acidic residues) spans 958–969; it reads RQSDERKRDREL. Phosphoserine is present on S986. Disordered stretches follow at residues 1003 to 1028 and 1082 to 1121; these read GLVG…RLQQ and RHQK…GSVC. Residues 1067-1094 are a coiled coil; that stretch reads QRGKMSAEEQLERMKRHQKALVRERKRT. A compositionally biased stretch (basic residues) spans 1082–1094; that stretch reads RHQKALVRERKRT.

Interacts with CAMSAP3 and CTNND1. Interacts (via WW domains) with TSPAN33 (via cytoplasmic domain) and with PDZD11; the interaction with TSPAN33 is dependent on PDZD11 being bound to PLEKHA7 and facilitates the docking of ADAM10 to zonula adherens through interaction of TSPAN33 with ADAM10.

Its subcellular location is the cell junction. The protein resides in the adherens junction. It is found in the cytoplasm. The protein localises to the cytoskeleton. It localises to the microtubule organizing center. Its subcellular location is the centrosome. Its function is as follows. Required for zonula adherens biogenesis and maintenance. Acts via its interaction with CAMSAP3, which anchors microtubules at their minus-ends to zonula adherens, leading to the recruitment of KIFC3 kinesin to the junctional site. Mediates docking of ADAM10 to zonula adherens through a PDZD11-dependent interaction with the ADAM10-binding protein TSPAN33. This Homo sapiens (Human) protein is Pleckstrin homology domain-containing family A member 7 (PLEKHA7).